The following is a 240-amino-acid chain: Small ribosomal subunit protein uS2 (240 aa).

This sequence belongs to the universal ribosomal protein uS2 family.

The sequence is that of Small ribosomal subunit protein uS2 from Haemophilus influenzae (strain 86-028NP).